A 322-amino-acid chain; its full sequence is uncharacterized protein (322 aa).

Residues 1–27 (MKRLFWNLKHKKAWLVLLLGTGMILSS) form the signal peptide. Residue Cys-28 is the site of N-palmitoyl cysteine attachment. Cys-28 is lipidated: S-diacylglycerol cysteine. Residues 235–254 (DNSTNPNAPGSGQGDSTPPA) show a composition bias toward polar residues. Positions 235–298 (DNSTNPNAPG…AVQRSQKSYG (64 aa)) are disordered. Gly residues predominate over residues 257 to 267 (GEGGGSDGSSG). The segment covering 274 to 296 (NGQNTTPTSPQSSQPAVQRSQKS) has biased composition (polar residues).

It localises to the cell membrane. This is an uncharacterized protein from Mycoplasma genitalium (strain ATCC 33530 / DSM 19775 / NCTC 10195 / G37) (Mycoplasmoides genitalium).